The following is a 115-amino-acid chain: T-cell receptor gamma chain V region V108B (115 aa).

The signal sequence occupies residues M1–G18. The tract at residues Q19–I115 is v segment.

The protein is T-cell receptor gamma chain V region V108B (Tcrg-V1) of Mus musculus (Mouse).